The following is a 251-amino-acid chain: Imidazole glycerol phosphate synthase subunit HisF (251 aa).

Residues D13 and D132 contribute to the active site.

Belongs to the HisA/HisF family. In terms of assembly, heterodimer of HisH and HisF.

Its subcellular location is the cytoplasm. The enzyme catalyses 5-[(5-phospho-1-deoxy-D-ribulos-1-ylimino)methylamino]-1-(5-phospho-beta-D-ribosyl)imidazole-4-carboxamide + L-glutamine = D-erythro-1-(imidazol-4-yl)glycerol 3-phosphate + 5-amino-1-(5-phospho-beta-D-ribosyl)imidazole-4-carboxamide + L-glutamate + H(+). The protein operates within amino-acid biosynthesis; L-histidine biosynthesis; L-histidine from 5-phospho-alpha-D-ribose 1-diphosphate: step 5/9. Its function is as follows. IGPS catalyzes the conversion of PRFAR and glutamine to IGP, AICAR and glutamate. The HisF subunit catalyzes the cyclization activity that produces IGP and AICAR from PRFAR using the ammonia provided by the HisH subunit. In Campylobacter concisus (strain 13826), this protein is Imidazole glycerol phosphate synthase subunit HisF.